Consider the following 179-residue polypeptide: Transcription factor 21 (179 aa).

The disordered stretch occupies residues 20 to 87; it reads CDGLKMDSNK…QVQRNAANAR (68 aa). A compositionally biased stretch (low complexity) spans 33–46; the sequence is TSNESTEESSNCEN. Over residues 70–80 the composition is skewed to polar residues; it reads SGVSQEGKQVQ. The bHLH domain occupies 79-131; that stretch reads VQRNAANARERARMRVLSKAFSRLKTTLPWVPPDTKLSKLDTLRLASSYIAHL.

Efficient DNA binding requires dimerization with another bHLH protein. Forms a heterodimer with TCF3 and binds the E box (5'-CANNTG-3').

It is found in the nucleus. Involved in epithelial-mesenchymal interactions in kidney and lung morphogenesis that include epithelial differentiation and branching morphogenesis. May play a role in the specification or differentiation of one or more subsets of epicardial cell types. This Homo sapiens (Human) protein is Transcription factor 21 (TCF21).